Reading from the N-terminus, the 264-residue chain is Elongation factor Ts (264 aa).

The segment at 76–79 is involved in Mg(2+) ion dislocation from EF-Tu; the sequence is TDFV.

This sequence belongs to the EF-Ts family.

The protein resides in the cytoplasm. Functionally, associates with the EF-Tu.GDP complex and induces the exchange of GDP to GTP. It remains bound to the aminoacyl-tRNA.EF-Tu.GTP complex up to the GTP hydrolysis stage on the ribosome. The sequence is that of Elongation factor Ts from Deinococcus deserti (strain DSM 17065 / CIP 109153 / LMG 22923 / VCD115).